A 435-amino-acid polypeptide reads, in one-letter code: Eukaryotic translation initiation factor 3 subunit E (435 aa).

In terms of domain architecture, PCI spans 219-392 (FFNHAKGRDL…GHVVMGTQPL (174 aa)).

This sequence belongs to the eIF-3 subunit E family. In terms of assembly, component of the eukaryotic translation initiation factor 3 (eIF-3) complex.

It is found in the cytoplasm. Functionally, component of the eukaryotic translation initiation factor 3 (eIF-3) complex, which is involved in protein synthesis of a specialized repertoire of mRNAs and, together with other initiation factors, stimulates binding of mRNA and methionyl-tRNAi to the 40S ribosome. The eIF-3 complex specifically targets and initiates translation of a subset of mRNAs involved in cell proliferation. The sequence is that of Eukaryotic translation initiation factor 3 subunit E (eIF3-S6) from Culex quinquefasciatus (Southern house mosquito).